Consider the following 89-residue polypeptide: Small ribosomal subunit protein bS20 (89 aa).

Disordered stretches follow at residues 1-25 (MANI…ASMK) and 69-89 (KNAA…IQAS). The span at 7-20 (AIKRAKTSEKRRAH) shows a compositional bias: basic residues.

This sequence belongs to the bacterial ribosomal protein bS20 family.

Its function is as follows. Binds directly to 16S ribosomal RNA. In Geobacillus kaustophilus (strain HTA426), this protein is Small ribosomal subunit protein bS20.